A 231-amino-acid polypeptide reads, in one-letter code: Putative N-acetylmannosamine-6-phosphate 2-epimerase (231 aa).

The protein belongs to the NanE family.

The enzyme catalyses an N-acyl-D-glucosamine 6-phosphate = an N-acyl-D-mannosamine 6-phosphate. It functions in the pathway amino-sugar metabolism; N-acetylneuraminate degradation; D-fructose 6-phosphate from N-acetylneuraminate: step 3/5. In terms of biological role, converts N-acetylmannosamine-6-phosphate (ManNAc-6-P) to N-acetylglucosamine-6-phosphate (GlcNAc-6-P). The polypeptide is Putative N-acetylmannosamine-6-phosphate 2-epimerase (Listeria innocua serovar 6a (strain ATCC BAA-680 / CLIP 11262)).